Consider the following 541-residue polypeptide: Paromamine 6'-oxidase (541 aa).

A disordered region spans residues 1–29; it reads MKRLRGTLPSDARHAWHPEPLGPAHRDGW. The Proton acceptor role is filled by histidine 470.

Belongs to the GMC oxidoreductase family. FAD is required as a cofactor.

It catalyses the reaction 6'''-deamino-6'''-hydroxyneomycin C + O2 = 6'''-deamino-6'''-oxoneomycin C + H2O2. The catalysed reaction is paromamine + O2 = 6'-oxoparomamine + H2O2. It participates in antibiotic biosynthesis; neomycin biosynthesis. Glucosaminyl-6'-oxidase involved in the biosynthetic pathway of neomycin by mediating FAD-dependent dehydrogenation of paromamine to 6'-dehydro-6'-oxoparomamine. Works in combination with neamine transaminase to replace the 6-hydroxy group of paromamine with an amino group. Also able to collaborate with neomycin C transaminase to replace the 6'''-hydroxy group of 6'''-hydroxyneomycin C with an amino group. In Streptomyces fradiae (Streptomyces roseoflavus), this protein is Paromamine 6'-oxidase (neoG).